The following is a 323-amino-acid chain: tRNA-modifying protein YgfZ (323 aa).

2 residues coordinate folate: Trp29 and Trp182.

It belongs to the tRNA-modifying YgfZ family.

The protein localises to the cytoplasm. Functionally, folate-binding protein involved in regulating the level of ATP-DnaA and in the modification of some tRNAs. It is probably a key factor in regulatory networks that act via tRNA modification, such as initiation of chromosomal replication. This Vibrio cholerae serotype O1 (strain M66-2) protein is tRNA-modifying protein YgfZ.